Here is a 202-residue protein sequence, read N- to C-terminus: LexA repressor (202 aa).

The H-T-H motif DNA-binding region spans R28 to K48. Catalysis depends on for autocatalytic cleavage activity residues S119 and K156.

This sequence belongs to the peptidase S24 family. Homodimer.

The enzyme catalyses Hydrolysis of Ala-|-Gly bond in repressor LexA.. In terms of biological role, represses a number of genes involved in the response to DNA damage (SOS response), including recA and lexA. Binds to the 16 bp palindromic sequence 5'-CTGTATATATATACAG-3'. In the presence of single-stranded DNA, RecA interacts with LexA causing an autocatalytic cleavage which disrupts the DNA-binding part of LexA, leading to derepression of the SOS regulon and eventually DNA repair. This is LexA repressor from Pectobacterium carotovorum subsp. carotovorum (Erwinia carotovora subsp. carotovora).